The following is a 156-amino-acid chain: Small ribosomal subunit protein uS7 (156 aa).

The protein belongs to the universal ribosomal protein uS7 family. As to quaternary structure, part of the 30S ribosomal subunit. Contacts proteins S9 and S11.

One of the primary rRNA binding proteins, it binds directly to 16S rRNA where it nucleates assembly of the head domain of the 30S subunit. Is located at the subunit interface close to the decoding center, probably blocks exit of the E-site tRNA. The chain is Small ribosomal subunit protein uS7 (rpsG) from Geobacillus stearothermophilus (Bacillus stearothermophilus).